We begin with the raw amino-acid sequence, 447 residues long: Elongation factor 1-alpha (447 aa).

The region spanning 5–230 is the tr-type G domain; sequence KIHISIVVIG…DQINEPKRPS (226 aa). The G1 stretch occupies residues 14–21; sequence GHVDSGKS. 14-21 serves as a coordination point for GTP; sequence GHVDSGKS. Lys55 is subject to N6,N6-dimethyllysine. The segment at 70–74 is G2; the sequence is GITID. At Lys79 the chain carries N6,N6,N6-trimethyllysine. The segment at 91–94 is G3; the sequence is DAPG. GTP contacts are provided by residues 91 to 95 and 153 to 156; these read DAPGH and NKMD. Residues 153–156 form a G4 region; sequence NKMD. Lys187 is modified (N6,N6,N6-trimethyllysine). Residues 194-196 are G5; it reads SGF. An N6-methyllysine modification is found at Lys261. At Glu289 the chain carries 5-glutamyl glycerylphosphorylethanolamine. Residue Lys306 is modified to N6,N6,N6-trimethyllysine. 5-glutamyl glycerylphosphorylethanolamine is present on Glu362. Residue Lys396 is modified to N6,N6,N6-trimethyllysine.

This sequence belongs to the TRAFAC class translation factor GTPase superfamily. Classic translation factor GTPase family. EF-Tu/EF-1A subfamily.

Its subcellular location is the cytoplasm. In terms of biological role, this protein promotes the GTP-dependent binding of aminoacyl-tRNA to the A-site of ribosomes during protein biosynthesis. The sequence is that of Elongation factor 1-alpha (BLT63) from Hordeum vulgare (Barley).